A 154-amino-acid polypeptide reads, in one-letter code: Ribosome maturation factor RimP (154 aa).

It belongs to the RimP family.

It localises to the cytoplasm. Its function is as follows. Required for maturation of 30S ribosomal subunits. The sequence is that of Ribosome maturation factor RimP from Prochlorococcus marinus (strain MIT 9313).